A 410-amino-acid chain; its full sequence is Probable peptidoglycan glycosyltransferase FtsW (410 aa).

Transmembrane regions (helical) follow at residues Leu-39–Tyr-59, Tyr-78–Phe-98, Phe-108–Val-128, Gly-177–Asp-197, Phe-198–Asn-218, Val-221–Pro-241, Ile-303–Ile-323, Gly-342–Val-362, and Leu-374–Leu-394.

The protein belongs to the SEDS family. FtsW subfamily.

Its subcellular location is the cell inner membrane. It catalyses the reaction [GlcNAc-(1-&gt;4)-Mur2Ac(oyl-L-Ala-gamma-D-Glu-L-Lys-D-Ala-D-Ala)](n)-di-trans,octa-cis-undecaprenyl diphosphate + beta-D-GlcNAc-(1-&gt;4)-Mur2Ac(oyl-L-Ala-gamma-D-Glu-L-Lys-D-Ala-D-Ala)-di-trans,octa-cis-undecaprenyl diphosphate = [GlcNAc-(1-&gt;4)-Mur2Ac(oyl-L-Ala-gamma-D-Glu-L-Lys-D-Ala-D-Ala)](n+1)-di-trans,octa-cis-undecaprenyl diphosphate + di-trans,octa-cis-undecaprenyl diphosphate + H(+). The protein operates within cell wall biogenesis; peptidoglycan biosynthesis. In terms of biological role, peptidoglycan polymerase that is essential for cell division. The protein is Probable peptidoglycan glycosyltransferase FtsW of Aromatoleum aromaticum (strain DSM 19018 / LMG 30748 / EbN1) (Azoarcus sp. (strain EbN1)).